The following is a 223-amino-acid chain: Small ribosomal subunit protein uS3 (223 aa).

A KH type-2 domain is found at Ile39–Lys108.

It belongs to the universal ribosomal protein uS3 family. Part of the 30S ribosomal subunit. Forms a tight complex with proteins S10 and S14.

Functionally, binds the lower part of the 30S subunit head. Binds mRNA in the 70S ribosome, positioning it for translation. This is Small ribosomal subunit protein uS3 from Clostridium botulinum (strain 657 / Type Ba4).